The primary structure comprises 475 residues: Mitochondrial adenyl nucleotide antiporter SLC25A24 (475 aa).

A regulatory N-terminal domain region spans residues 1–173 (MLRWLRGFVL…RFWKHSTGID (173 aa)). Residues 1–197 (MLRWLRGFVL…ERKSGQWWRQ (197 aa)) are Mitochondrial intermembrane-facing. 4 EF-hand domains span residues 19-54 (EPPTRYETLFQALDRNGDGVVDIRELQEGLKSLGIP), 55-88 (LGQDAEEKIFTTGDVNKDGKLDFEEFMKYLKDHE), 86-121 (DHEKKMKLAFKSLDKNNDGKIEASEIVQSLQTLGLT), and 122-157 (ISEQQAELILQSIDADGTMTVDWNEWRDYFLFNPVA). Asp-32, Asn-34, Asp-36, Val-38, Glu-43, Asp-68, Asn-70, Asp-72, Lys-74, Glu-79, Asp-99, Asn-101, Asp-103, Lys-105, Glu-110, Asp-135, Asp-137, Thr-139, Thr-141, and Glu-146 together coordinate Ca(2+). Residues 159–168 (IEEIIRFWKH) are linker region. A C-terminal transmembrane transporter domain region spans residues 174–475 (IGDSLTIPDE…MKQTLGVTQK (302 aa)). Solcar repeat units follow at residues 192–276 (GQWW…YKKL), 284–369 (IGTF…LKSH), and 381–469 (PGVL…MKQT). A helical transmembrane segment spans residues 198 to 215 (LLAGGIAGAVSRTSTAPL). Over 216–250 (DRLKVMMQVHGSKSMNIFGGFRQMIKEGGVRSLWR) the chain is Mitochondrial matrix. A helical transmembrane segment spans residues 251–270 (GNGTNVIKIAPETAVKFWVY). Residues 271 to 293 (EQYKKLLTEEGQKIGTFERFISG) lie on the Mitochondrial intermembrane side of the membrane. A helical membrane pass occupies residues 294–307 (SMAGATAQTFIYPM). Over 308-343 (EVMKTRLAVGKTGQYSGIYDCAKKILKYEGFGAFYK) the chain is Mitochondrial matrix. Lys-318 bears the N6-acetyllysine; alternate mark. Lys-318 carries the post-translational modification N6-succinyllysine; alternate. Lys-334 is modified (N6-acetyllysine). A helical transmembrane segment spans residues 344–363 (GYVPNLLGIIPYAGIDLAVY). The Mitochondrial intermembrane portion of the chain corresponds to 364–386 (ELLKSHWLDNFAKDSVNPGVLVL). The helical transmembrane segment at 387 to 404 (LGCGALSSTCGQLASYPL) threads the bilayer. The Mitochondrial matrix portion of the chain corresponds to 405–443 (ALVRTRMQAQAMLEGAPQLNMVGLFRRIISKEGLPGLYR). N6-acetyllysine; alternate is present on Lys-435. Lys-435 is modified (N6-succinyllysine; alternate). The chain crosses the membrane as a helical span at residues 444–463 (GITPNFMKVLPAVGISYVVY). The Mitochondrial intermembrane segment spans residues 464-475 (ENMKQTLGVTQK).

It belongs to the mitochondrial carrier (TC 2.A.29) family. As to quaternary structure, monomer. Mainly expressed in colon. Also expressed in the small intestine proximal to the ileum. Weakly expressed in kidney but not in the liver.

It localises to the mitochondrion inner membrane. The protein localises to the peroxisome membrane. It catalyses the reaction Mg(2+)(out) + phosphate(in) + ATP(out) = Mg(2+)(in) + phosphate(out) + ATP(in). The catalysed reaction is ADP(out) + phosphate(in) + H(+)(out) = ADP(in) + phosphate(out) + H(+)(in). It carries out the reaction AMP(out) + phosphate(in) = AMP(in) + phosphate(out). The enzyme catalyses phosphate(in) + ATP(out) + 2 H(+)(out) = phosphate(out) + ATP(in) + 2 H(+)(in). It catalyses the reaction dADP(in) + ADP(out) = dADP(out) + ADP(in). The catalysed reaction is Mg(2+)(in) + ADP(out) + ATP(in) + H(+)(out) = Mg(2+)(out) + ADP(in) + ATP(out) + H(+)(in). It carries out the reaction ADP(out) + diphosphate(in) = ADP(in) + diphosphate(out). The enzyme catalyses dAMP(in) + ADP(out) + H(+)(out) = dAMP(out) + ADP(in) + H(+)(in). It catalyses the reaction 3'-AMP(in) + ADP(out) + H(+)(out) = 3'-AMP(out) + ADP(in) + H(+)(in). The catalysed reaction is dAMP(out) + phosphate(in) = dAMP(in) + phosphate(out). It carries out the reaction 3'-AMP(out) + phosphate(in) = 3'-AMP(in) + phosphate(out). The enzyme catalyses dADP(out) + phosphate(in) + H(+)(out) = dADP(in) + phosphate(out) + H(+)(in). With respect to regulation, activated by an increase in cytosolic calcium levels that induce a conformational change of the N-terminal regulatory domain, uncapping the channel and allowing transport. Inhibited by bathophenanthroline, mersalyl, p-hydroxymercuribenzoate, bromcresol purple and tannic acid. Electroneutral antiporter that mediates the transport of adenyl nucleotides through the inner mitochondrial membrane. Originally identified as an ATP-magnesium/inorganic phosphate antiporter, it also acts as a broad specificity adenyl nucleotide antiporter. By regulating the mitochondrial matrix adenyl nucleotide pool could adapt to changing cellular energetic demands and indirectly regulate adenyl nucleotide-dependent metabolic pathways. In vitro, a low activity is also observed with guanyl and pyrimidine nucleotides. May play a role in protecting cells against oxidative stress-induced cell death, by buffering calcium levels in the mitochondrial matrix through the formation of calcium-phosphate precipitates. This chain is Mitochondrial adenyl nucleotide antiporter SLC25A24 (SLC25A24), found in Oryctolagus cuniculus (Rabbit).